Reading from the N-terminus, the 756-residue chain is Nucleomorphin (756 aa).

A compositionally biased stretch (polar residues) spans Met-1–Ser-10. Residues Met-1 to Ser-113 form a disordered region. Low complexity-rich tracts occupy residues Asn-16–Ser-66 and Asn-75–Asn-94. The segment covering Gly-95 to Ser-113 has biased composition (polar residues). Residues Leu-124–Val-216 form the BRCT domain. Disordered stretches follow at residues Asn-229–Gln-251, Pro-272–Glu-298, Lys-359–Asn-403, and Thr-422–Leu-463. Composition is skewed to low complexity over residues Leu-285–Glu-298, Asn-364–Lys-401, and Thr-422–Ser-432. Over residues Lys-448–His-459 the composition is skewed to basic residues. A Nuclear localization signal motif is present at residues Lys-464 to Lys-480. The tract at residues Ala-495 to Lys-512 is calmodulin binding. Polar residues predominate over residues Ser-514–Ile-529. A disordered region spans residues Ser-514–Glu-587. A compositionally biased stretch (acidic residues) spans Tyr-536 to Glu-587. Positions Asp-537–Asp-588 are DEED region. Calmodulin binding stretches follow at residues Val-589–Lys-606 and Lys-596–His-613. 2 disordered regions span residues His-613–Arg-639 and Leu-660–Ile-700. Residues Leu-668 to Thr-691 show a composition bias toward polar residues.

As to quaternary structure, interacts with calmodulin and CBPD1 in the presence of Ca(2+).

The protein localises to the nucleus. The chain is Nucleomorphin (numA) from Dictyostelium discoideum (Social amoeba).